Reading from the N-terminus, the 602-residue chain is Aspartate--tRNA(Asp/Asn) ligase (602 aa).

Glu176 lines the L-aspartate pocket. The interval 200–203 (QQFK) is aspartate. Arg222 and His452 together coordinate L-aspartate. An ATP-binding site is contributed by 222-224 (RDE). ATP is bound at residue Glu490. Arg497 contributes to the L-aspartate binding site. 542–545 (GIDR) is a binding site for ATP.

It belongs to the class-II aminoacyl-tRNA synthetase family. Type 1 subfamily. Homodimer.

It is found in the cytoplasm. The enzyme catalyses tRNA(Asx) + L-aspartate + ATP = L-aspartyl-tRNA(Asx) + AMP + diphosphate. In terms of biological role, aspartyl-tRNA synthetase with relaxed tRNA specificity since it is able to aspartylate not only its cognate tRNA(Asp) but also tRNA(Asn). Reaction proceeds in two steps: L-aspartate is first activated by ATP to form Asp-AMP and then transferred to the acceptor end of tRNA(Asp/Asn). In Rickettsia conorii (strain ATCC VR-613 / Malish 7), this protein is Aspartate--tRNA(Asp/Asn) ligase.